The primary structure comprises 1040 residues: Multidrug resistance protein MdtB (1040 aa).

The next 12 helical transmembrane spans lie at 16–36, 347–367, 369–389, 396–416, 440–460, 472–492, 537–557, 863–883, 888–908, 911–931, 968–988, and 998–1018; these read FIMR…AGII, LMMA…NIPA, IIPG…MVFL, LTLM…IVVI, IGFT…PLLF, FAIT…TLTP, WLTL…WVFI, LGST…VLGI, FIHP…ALLA, IAGS…IGIV, ILMT…STGV, and IGMV…TPVI.

This sequence belongs to the resistance-nodulation-cell division (RND) (TC 2.A.6) family. MdtB subfamily. In terms of assembly, part of a tripartite efflux system composed of MdtA, MdtB and MdtC. MdtB forms a heteromultimer with MdtC.

The protein resides in the cell inner membrane. In terms of biological role, the MdtABC tripartite complex confers resistance against novobiocin and deoxycholate. The polypeptide is Multidrug resistance protein MdtB (Escherichia coli O139:H28 (strain E24377A / ETEC)).